A 169-amino-acid polypeptide reads, in one-letter code: NADH-quinone oxidoreductase subunit B (169 aa).

Residues cysteine 42, cysteine 43, cysteine 107, and cysteine 136 each contribute to the [4Fe-4S] cluster site.

It belongs to the complex I 20 kDa subunit family. In terms of assembly, NDH-1 is composed of 14 different subunits. Subunits NuoB, C, D, E, F, and G constitute the peripheral sector of the complex. [4Fe-4S] cluster serves as cofactor.

Its subcellular location is the cell inner membrane. It carries out the reaction a quinone + NADH + 5 H(+)(in) = a quinol + NAD(+) + 4 H(+)(out). In terms of biological role, NDH-1 shuttles electrons from NADH, via FMN and iron-sulfur (Fe-S) centers, to quinones in the respiratory chain. The immediate electron acceptor for the enzyme in this species is believed to be ubiquinone. Couples the redox reaction to proton translocation (for every two electrons transferred, four hydrogen ions are translocated across the cytoplasmic membrane), and thus conserves the redox energy in a proton gradient. The protein is NADH-quinone oxidoreductase subunit B of Helicobacter hepaticus (strain ATCC 51449 / 3B1).